Reading from the N-terminus, the 110-residue chain is Large ribosomal subunit protein uL22 (110 aa).

It belongs to the universal ribosomal protein uL22 family. In terms of assembly, part of the 50S ribosomal subunit.

Functionally, this protein binds specifically to 23S rRNA; its binding is stimulated by other ribosomal proteins, e.g. L4, L17, and L20. It is important during the early stages of 50S assembly. It makes multiple contacts with different domains of the 23S rRNA in the assembled 50S subunit and ribosome. The globular domain of the protein is located near the polypeptide exit tunnel on the outside of the subunit, while an extended beta-hairpin is found that lines the wall of the exit tunnel in the center of the 70S ribosome. In Aggregatibacter actinomycetemcomitans (Actinobacillus actinomycetemcomitans), this protein is Large ribosomal subunit protein uL22.